Here is a 122-residue protein sequence, read N- to C-terminus: Large ribosomal subunit protein uL22c (122 aa).

It belongs to the universal ribosomal protein uL22 family. As to quaternary structure, part of the 50S ribosomal subunit.

Its subcellular location is the plastid. It is found in the chloroplast. In terms of biological role, this protein binds specifically to 23S rRNA. The globular domain of the protein is located near the polypeptide exit tunnel on the outside of the subunit, while an extended beta-hairpin is found that lines the wall of the exit tunnel in the center of the 70S ribosome. This Adiantum capillus-veneris (Maidenhair fern) protein is Large ribosomal subunit protein uL22c (rpl22).